The chain runs to 365 residues: Membrane cofactor protein (365 aa).

The first 44 residues, 1–44, serve as a signal peptide directing secretion; it reads MTAAPLMPDSTHPCRRRKSYTFFWCSLGVYAEALLFLLSHLSDA. 4 Sushi domains span residues 45–106, 107–170, 171–236, and 237–296; these read CELP…GCIK, VQCT…HCEK, IYCL…ECKV, and VKCP…KCLK. The Extracellular portion of the chain corresponds to 45-329; it reads CELPRPFEAM…GIFSQELDAW (285 aa). 6 disulfide bridges follow: C109–C151, C137–C168, C173–C221, C202–C234, C239–C281, and C267–C294. The N-linked (GlcNAc...) asparagine glycan is linked to N181. T205 carries an O-linked (GalNAc...) threonine glycan. O-linked (GalNAc...) threonine glycosylation is found at T301 and T304. An N-linked (GlcNAc...) asparagine glycan is attached at N310. A glycan (O-linked (GalNAc...) threonine) is linked at T312. Residues 330-350 traverse the membrane as a helical segment; that stretch reads IIALIVITSIVGVFILCLIVL. At 351–365 the chain is on the cytoplasmic side; sequence RCFEHRKKTNVSAAR.

Interacts with C3b. Interacts with C4b. Interacts with moesin/MSN. Post-translationally, may be O-glycosylated. N-glycosylated. In terms of tissue distribution, present only in testis (at protein level).

The protein localises to the cytoplasmic vesicle. The protein resides in the secretory vesicle. It is found in the acrosome inner membrane. Its subcellular location is the secreted. In terms of biological role, may be involved in the fusion of the spermatozoa with the oocyte during fertilization. This is Membrane cofactor protein (Cd46) from Mus musculus (Mouse).